A 73-amino-acid chain; its full sequence is Cell division protein ZapB (73 aa).

Residues Leu3 to Leu69 adopt a coiled-coil conformation. The segment at Glu30–Gln50 is disordered. Positions Asn41–Gln50 are enriched in low complexity.

This sequence belongs to the ZapB family. As to quaternary structure, homodimer. The ends of the coiled-coil dimer bind to each other, forming polymers. Interacts with FtsZ.

Its subcellular location is the cytoplasm. Functionally, non-essential, abundant cell division factor that is required for proper Z-ring formation. It is recruited early to the divisome by direct interaction with FtsZ, stimulating Z-ring assembly and thereby promoting cell division earlier in the cell cycle. Its recruitment to the Z-ring requires functional FtsA or ZipA. The polypeptide is Cell division protein ZapB (Shewanella putrefaciens (strain CN-32 / ATCC BAA-453)).